The chain runs to 303 residues: Acetaldehyde dehydrogenase 1 (303 aa).

Cys-130 functions as the Acyl-thioester intermediate in the catalytic mechanism. Residues 161–169 and Asn-272 each bind NAD(+); that span reads SVGPGTRKN.

It belongs to the acetaldehyde dehydrogenase family.

The catalysed reaction is acetaldehyde + NAD(+) + CoA = acetyl-CoA + NADH + H(+). This chain is Acetaldehyde dehydrogenase 1, found in Methylibium petroleiphilum (strain ATCC BAA-1232 / LMG 22953 / PM1).